A 117-amino-acid chain; its full sequence is Large ribosomal subunit protein bL20 (117 aa).

It belongs to the bacterial ribosomal protein bL20 family.

Its function is as follows. Binds directly to 23S ribosomal RNA and is necessary for the in vitro assembly process of the 50S ribosomal subunit. It is not involved in the protein synthesizing functions of that subunit. The protein is Large ribosomal subunit protein bL20 of Gloeothece citriformis (strain PCC 7424) (Cyanothece sp. (strain PCC 7424)).